The following is a 70-amino-acid chain: Conotoxin Lt3.4 (70 aa).

Positions 1–24 (MLKMGVLLFTFLVLFPLAMFQLDA) are cleaved as a signal peptide. Positions 25-54 (DQPVERYAENKQDLNRDERMKIMLSALRQR) are excised as a propeptide. At Q55 the chain carries Pyrrolidone carboxylic acid. Cystine bridges form between C56–C68, C57–C66, and C62–C69.

It belongs to the conotoxin M superfamily. In terms of tissue distribution, expressed by the venom duct.

It is found in the secreted. This chain is Conotoxin Lt3.4, found in Conus litteratus (Lettered cone).